Consider the following 269-residue polypeptide: MLLLDLMSSPSPQLLVAAAQQTLGMGKRRSPPQAICLHLAGEVLAVARGLKPAVLYDCNCAGASELQSYLEELKGLGFLTFGLHILEIGENSLIVSPEHVCQHLEQVLLGTIAFVDVSSCQRHPSVCSLDQLQDLKALVAEIITHLQGLQRDLSLAVSYSRLHSSDWNLCTVFGILLGYPVPYTFHLNQGDDNCLALTPLRVFTARISWLLGQPPILLYSFSVPESLFPGLRDILNTWEKDLRTRFRTQNDFADLSISSEIVTLPAVAL.

The protein belongs to the UPF0739 family.

The polypeptide is UPF0739 protein C1orf74 (C1orf74) (Homo sapiens (Human)).